The chain runs to 130 residues: Small ribosomal subunit protein uS9 (130 aa).

The segment at 104–130 (LTRDPRMKERRKYGLKKARKAPQFSKR) is disordered. Over residues 111–130 (KERRKYGLKKARKAPQFSKR) the composition is skewed to basic residues.

This sequence belongs to the universal ribosomal protein uS9 family.

The chain is Small ribosomal subunit protein uS9 from Moorella thermoacetica (strain ATCC 39073 / JCM 9320).